Consider the following 1226-residue polypeptide: DNA-directed RNA polymerase subunit beta'' (1226 aa).

Zn(2+) contacts are provided by Cys223, Cys297, Cys304, and Cys307.

It belongs to the RNA polymerase beta' chain family. RpoC2 subfamily. In plastids the minimal PEP RNA polymerase catalytic core is composed of four subunits: alpha, beta, beta', and beta''. When a (nuclear-encoded) sigma factor is associated with the core the holoenzyme is formed, which can initiate transcription. It depends on Zn(2+) as a cofactor.

Its subcellular location is the plastid. The protein resides in the chloroplast. The enzyme catalyses RNA(n) + a ribonucleoside 5'-triphosphate = RNA(n+1) + diphosphate. Functionally, DNA-dependent RNA polymerase catalyzes the transcription of DNA into RNA using the four ribonucleoside triphosphates as substrates. In Pyropia yezoensis (Susabi-nori), this protein is DNA-directed RNA polymerase subunit beta''.